Here is a 232-residue protein sequence, read N- to C-terminus: Lipoprotein-releasing system ATP-binding protein LolD (232 aa).

Positions Val-11–Leu-231 constitute an ABC transporter domain. Ala-47–Ser-54 lines the ATP pocket.

It belongs to the ABC transporter superfamily. Lipoprotein translocase (TC 3.A.1.125) family. The complex is composed of two ATP-binding proteins (LolD) and two transmembrane proteins (LolC and LolE).

It localises to the cell inner membrane. In terms of biological role, part of the ABC transporter complex LolCDE involved in the translocation of mature outer membrane-directed lipoproteins, from the inner membrane to the periplasmic chaperone, LolA. Responsible for the formation of the LolA-lipoprotein complex in an ATP-dependent manner. The polypeptide is Lipoprotein-releasing system ATP-binding protein LolD (Nitrobacter winogradskyi (strain ATCC 25391 / DSM 10237 / CIP 104748 / NCIMB 11846 / Nb-255)).